We begin with the raw amino-acid sequence, 154 residues long: Protein aau3 (154 aa).

The HTH rrf2-type domain occupies 2-132; that stretch reads RLTKQTNYAV…QGYTIDDLVK (131 aa). [2Fe-2S] cluster is bound by residues cysteine 91, cysteine 99, and cysteine 105.

Requires [2Fe-2S] cluster as cofactor.

In terms of biological role, required for growth utilizing PHB cycle intermediates. The chain is Protein aau3 (aau3) from Rhizobium meliloti (strain 1021) (Ensifer meliloti).